A 375-amino-acid chain; its full sequence is Acyl-coenzyme A diphosphatase NUDT19 (375 aa).

Residues 15-263 (AASIVLAAGW…IWLPPPQFYE (249 aa)) form the Nudix hydrolase domain. The segment at 91-116 (LGPAPFSRTAFPSLPDTDDHKTDNTG) is disordered. Residues 116 to 137 (GTLPEDVAFRICAVREAFEEAG) carry the Nudix box motif. Mg(2+) is bound by residues glutamate 131 and glutamate 135. The Microbody targeting signal signature appears at 373-375 (SHL).

The protein belongs to the Nudix hydrolase family. In terms of assembly, monomer. The cofactor is Mg(2+). Mn(2+) serves as cofactor.

The protein resides in the peroxisome. It carries out the reaction an acyl-CoA + H2O = an acyl-4'-phosphopantetheine + adenosine 3',5'-bisphosphate + 2 H(+). It catalyses the reaction CoA + H2O = (R)-4'-phosphopantetheine + adenosine 3',5'-bisphosphate + 2 H(+). The enzyme catalyses hexanoyl-CoA + H2O = hexanoyl-4'-phosphopantetheine + adenosine 3',5'-bisphosphate + 2 H(+). The catalysed reaction is octanoyl-CoA + H2O = S-octanoyl-4'-phosphopantetheine + adenosine 3',5'-bisphosphate + 2 H(+). It carries out the reaction butanoyl-CoA + H2O = S-butanoyl-4'-phosphopantetheine + adenosine 3',5'-bisphosphate + 2 H(+). It catalyses the reaction propanoyl-CoA + H2O = propanoyl-4'-phosphopantetheine + adenosine 3',5'-bisphosphate + 2 H(+). The enzyme catalyses malonyl-CoA + H2O = malonyl-4'-phosphopantetheine + adenosine 3',5'-bisphosphate + 2 H(+). The catalysed reaction is succinyl-CoA + H2O = succinyl-4'-phosphopantetheine + adenosine 3',5'-bisphosphate + 2 H(+). It carries out the reaction choloyl-CoA + H2O = S-choloyl-4'-phosphopantetheine + adenosine 3',5'-bisphosphate + 2 H(+). It catalyses the reaction 4,8-dimethylnonanoyl-CoA + H2O = S-(4,8-dimethylnonanoyl)-4'-phosphopantetheine + adenosine 3',5'-bisphosphate + 2 H(+). The enzyme catalyses (9Z,12Z,15Z)-octadecatrienoyl-CoA + H2O = S-(9Z,12Z,15Z-octadecatrienoyl)-4'-phosphopantetheine + adenosine 3',5'-bisphosphate + 2 H(+). The catalysed reaction is (9Z,12Z)-octadecadienoyl-CoA + H2O = S-(9Z,12Z-octadecadienoyl)-4'-phosphopantetheine + adenosine 3',5'-bisphosphate + 2 H(+). It carries out the reaction (9Z)-hexadecenoyl-CoA + H2O = S-(9Z-hexadecenoyl)-4'-phosphopantetheine + adenosine 3',5'-bisphosphate + 2 H(+). It catalyses the reaction (9Z)-tetradecenoyl-CoA + H2O = S-(9Z-tetradecenoyl)-4'-phosphopantetheine + adenosine 3',5'-bisphosphate + 2 H(+). The enzyme catalyses (6Z)-octenoyl-CoA + H2O = S-(6Z-octenoyl)-4'-phosphopantetheine + adenosine 3',5'-bisphosphate + 2 H(+). The catalysed reaction is hexadecanoyl-CoA + H2O = S-hexadecanoyl-4'-phosphopantetheine + adenosine 3',5'-bisphosphate + 2 H(+). It carries out the reaction tetradecanoyl-CoA + H2O = tetradecanoyl-4'-phosphopantetheine + adenosine 3',5'-bisphosphate + 2 H(+). It catalyses the reaction dodecanoyl-CoA + H2O = S-dodecanoyl-4'-phosphopantetheine + adenosine 3',5'-bisphosphate + 2 H(+). The enzyme catalyses a 5'-end CoA-ribonucleoside in mRNA + H2O = a 5'-end phospho-adenosine-phospho-ribonucleoside in mRNA + (R)-4'-phosphopantetheine + 2 H(+). Fatty acyl-coenzyme A (CoA) diphosphatase that hydrolyzes fatty acyl-CoA to yield acyl-4'-phosphopantetheine and adenosine 3',5'-bisphosphate. Mediates the hydrolysis of a wide range of CoA esters, including choloyl-CoA and branched-chain fatty-acyl-CoA esters and at low substrate concentrations medium and long-chain fatty-acyl-CoA esters are the primary substrates. Highest activity seen with medium-chain acyl-CoA esters and higher rates of activity seen with the unsaturated acyl-CoA esters compared with the saturated esters. Exhibits decapping activity towards dpCoA-capped RNAs in vitro. This is Acyl-coenzyme A diphosphatase NUDT19 (NUDT19) from Homo sapiens (Human).